Consider the following 189-residue polypeptide: Peptidyl-tRNA hydrolase (189 aa).

Y15 contacts tRNA. H20 acts as the Proton acceptor in catalysis. The tRNA site is built by F66, N68, and N114.

Belongs to the PTH family. In terms of assembly, monomer.

Its subcellular location is the cytoplasm. The catalysed reaction is an N-acyl-L-alpha-aminoacyl-tRNA + H2O = an N-acyl-L-amino acid + a tRNA + H(+). Its function is as follows. Hydrolyzes ribosome-free peptidyl-tRNAs (with 1 or more amino acids incorporated), which drop off the ribosome during protein synthesis, or as a result of ribosome stalling. Catalyzes the release of premature peptidyl moieties from peptidyl-tRNA molecules trapped in stalled 50S ribosomal subunits, and thus maintains levels of free tRNAs and 50S ribosomes. This chain is Peptidyl-tRNA hydrolase, found in Streptococcus pneumoniae (strain P1031).